Reading from the N-terminus, the 100-residue chain is Urease subunit gamma (100 aa).

This sequence belongs to the urease gamma subunit family. In terms of assembly, heterotrimer of UreA (gamma), UreB (beta) and UreC (alpha) subunits. Three heterotrimers associate to form the active enzyme.

The protein resides in the cytoplasm. The enzyme catalyses urea + 2 H2O + H(+) = hydrogencarbonate + 2 NH4(+). The protein operates within nitrogen metabolism; urea degradation; CO(2) and NH(3) from urea (urease route): step 1/1. In Rhizobium meliloti (strain 1021) (Ensifer meliloti), this protein is Urease subunit gamma.